Consider the following 689-residue polypeptide: Glycine--tRNA ligase beta subunit (689 aa).

The protein belongs to the class-II aminoacyl-tRNA synthetase family. In terms of assembly, tetramer of two alpha and two beta subunits.

The protein resides in the cytoplasm. The catalysed reaction is tRNA(Gly) + glycine + ATP = glycyl-tRNA(Gly) + AMP + diphosphate. The protein is Glycine--tRNA ligase beta subunit of Photobacterium profundum (strain SS9).